We begin with the raw amino-acid sequence, 320 residues long: ATP phosphoribosyltransferase (320 aa).

This sequence belongs to the ATP phosphoribosyltransferase family. Long subfamily. Mg(2+) is required as a cofactor.

The protein localises to the cytoplasm. It catalyses the reaction 1-(5-phospho-beta-D-ribosyl)-ATP + diphosphate = 5-phospho-alpha-D-ribose 1-diphosphate + ATP. It functions in the pathway amino-acid biosynthesis; L-histidine biosynthesis; L-histidine from 5-phospho-alpha-D-ribose 1-diphosphate: step 1/9. Feedback inhibited by histidine. Catalyzes the condensation of ATP and 5-phosphoribose 1-diphosphate to form N'-(5'-phosphoribosyl)-ATP (PR-ATP). Has a crucial role in the pathway because the rate of histidine biosynthesis seems to be controlled primarily by regulation of HisG enzymatic activity. The sequence is that of ATP phosphoribosyltransferase (hisG) from Caulobacter vibrioides (strain ATCC 19089 / CIP 103742 / CB 15) (Caulobacter crescentus).